A 289-amino-acid chain; its full sequence is BTB/POZ domain-containing protein KCTD7 (289 aa).

Residues 1 to 42 (MVVVTGREPDSRHSDGAMSSSEAEDDFLEPATPTATQAGHGL) form a disordered region. Residues 53–141 (VPLNIGGAHF…YAIGPLLEQL (89 aa)) enclose the BTB domain.

In terms of assembly, interacts with CUL3. As to expression, high expression in brain, particularly in post-mitotic neurons. Expressed in the mitral cells of the olfactory bulbs, the hippocampus, the deep layers of the cerebral cortex and Purkinje cells of the cerebellum. Not detected in astrocytes or microglial cells. Also expressed in heart, liver, spleen and kidney.

The protein resides in the cell membrane. It localises to the cytoplasm. The protein localises to the cytosol. May be involved in the control of excitability of cortical neurons. This is BTB/POZ domain-containing protein KCTD7 (Kctd7) from Mus musculus (Mouse).